We begin with the raw amino-acid sequence, 348 residues long: Protein RecA (348 aa).

Residue 66 to 73 (GPESSGKT) coordinates ATP.

The protein belongs to the RecA family.

The protein localises to the cytoplasm. Functionally, can catalyze the hydrolysis of ATP in the presence of single-stranded DNA, the ATP-dependent uptake of single-stranded DNA by duplex DNA, and the ATP-dependent hybridization of homologous single-stranded DNAs. It interacts with LexA causing its activation and leading to its autocatalytic cleavage. This chain is Protein RecA, found in Burkholderia lata (strain ATCC 17760 / DSM 23089 / LMG 22485 / NCIMB 9086 / R18194 / 383).